The following is a 226-amino-acid chain: ATP-dependent dethiobiotin synthetase BioD (226 aa).

12–17 lines the ATP pocket; that stretch reads GVGKTV. Mg(2+) is bound at residue Thr16. Lys37 is a catalytic residue. Position 41 (Thr41) interacts with substrate. ATP-binding positions include Asp49, 108–111, 169–170, and 197–199; these read EGAG, GS, and PAG. Asp49 and Glu108 together coordinate Mg(2+).

Belongs to the dethiobiotin synthetase family. Homodimer. Requires Mg(2+) as cofactor.

Its subcellular location is the cytoplasm. The catalysed reaction is (7R,8S)-7,8-diammoniononanoate + CO2 + ATP = (4R,5S)-dethiobiotin + ADP + phosphate + 3 H(+). Its pathway is cofactor biosynthesis; biotin biosynthesis; biotin from 7,8-diaminononanoate: step 1/2. Functionally, catalyzes a mechanistically unusual reaction, the ATP-dependent insertion of CO2 between the N7 and N8 nitrogen atoms of 7,8-diaminopelargonic acid (DAPA, also called 7,8-diammoniononanoate) to form a ureido ring. This Mycobacterium bovis (strain BCG / Pasteur 1173P2) protein is ATP-dependent dethiobiotin synthetase BioD.